Here is a 767-residue protein sequence, read N- to C-terminus: Cullin-1 (767 aa).

The Cullin neddylation domain maps to 699 to 760; that stretch reads DRKLLLQSAI…EKEYLERQGR (62 aa). K713 is covalently cross-linked (Glycyl lysine isopeptide (Lys-Gly) (interchain with G-Cter in NEDD8)).

The protein belongs to the cullin family. Component of multiple Cul1-RING E3 ubiquitin-protein ligase complexes commonly known as SCF (SKP1-CUL1-F-box) complexes, consisting of cul1, skp1, pip1 and a variable F-box domain-containing protein as substrate-specific subunit. Binds to the pop1 homodimer, the pop2 homodimer and the pop1/pop2 heterodimer forming the SCF(pop1-pop2) complex. Interacts with pof3, pof14 and skp1. Neddylated; enhancing the ubiquitin-ligase activity.

It localises to the cytoplasm. The protein operates within protein modification; protein ubiquitination. Functionally, core component of multiple cullin-RING-based SCF (SKP1-CUL1-F-box protein) E3 ubiquitin-protein ligase complexes, which mediate the ubiquitination of target proteins. The functional specificity of the SCF complex depends on the F-box protein as substrate recognition component. SCF(pop1-pop2) is required for the maintenance of ploidy and directs ubiquitination of cig2. In Schizosaccharomyces pombe (strain 972 / ATCC 24843) (Fission yeast), this protein is Cullin-1 (cul1).